The primary structure comprises 425 residues: uncharacterized protein (425 aa).

One can recognise an HD domain in the interval 55–181; that stretch reads RYSHSLGVYE…DLDADRMDYL (127 aa).

This is an uncharacterized protein from Mycoplasma pneumoniae (strain ATCC 29342 / M129 / Subtype 1) (Mycoplasmoides pneumoniae).